The primary structure comprises 453 residues: GTPase Der (453 aa).

2 consecutive EngA-type G domains span residues 3–167 and 187–360; these read PIIV…ISEK and IKVA…EDSK. Residues 9–16, 57–61, 119–122, 193–200, 240–244, and 305–308 contribute to the GTP site; these read GRTNVGKS, DTAGL, NKID, GRPNVGKS, DTAGA, and NKCD. A KH-like domain is found at 361–445; sequence RKISTSTLIK…PIQIQFKDNE (85 aa).

The protein belongs to the TRAFAC class TrmE-Era-EngA-EngB-Septin-like GTPase superfamily. EngA (Der) GTPase family. As to quaternary structure, associates with the 50S ribosomal subunit.

Its function is as follows. GTPase that plays an essential role in the late steps of ribosome biogenesis. The chain is GTPase Der from Buchnera aphidicola subsp. Acyrthosiphon pisum (strain 5A).